We begin with the raw amino-acid sequence, 249 residues long: O-methyltransferase adaD (249 aa).

Over residues 1-15 (MSSVTLTTTTTTTST) the composition is skewed to low complexity. The tract at residues 1–26 (MSSVTLTTTTTTTSTPPKPTPKDEPQ) is disordered.

The protein belongs to the methyltransferase superfamily.

The catalysed reaction is 2-acetyl-3,4a,8,10,11,12a-hexahydroxy-1,4,4a,5,12,12a-hexahydrotetracene-1,12-dione + S-adenosyl-L-methionine = TAN-1612 + S-adenosyl-L-homocysteine + H(+). Its pathway is secondary metabolite biosynthesis. O-methyltransferase; part of the gene cluster that mediates the biosynthesis of the linear tetracyclic TAN-1612 neuropeptide Y receptor antagonist. The decaketide backbone of TAN-1612 is synthesized by the non-reducing polyketide synthase adaA via condensation of one acetyl-CoA starter unit with 9 malonyl-CoA units. The FAD-dependent monooxygenase adaC then performs hydroxylation at C2 while the polaketide chain is still attached to the NRPKS adaA. The alpha-hydroxylation step at C2 appears to be crucial for the following C18-C1 Claisen cyclization and release of the C9-hydroxyl version of TAN-1612 from the NRPKS adaA, two steps performed by the lactamase-like protein adaB. Finally, the O-methyltransferase adaD performs the C9 O-methylation to complete the biosynthesis of TAN-1612. This chain is O-methyltransferase adaD, found in Aspergillus niger (strain ATCC MYA-4892 / CBS 513.88 / FGSC A1513).